A 291-amino-acid polypeptide reads, in one-letter code: 4-hydroxy-tetrahydrodipicolinate synthase (291 aa).

A pyruvate-binding site is contributed by T45. Y133 serves as the catalytic Proton donor/acceptor. K161 serves as the catalytic Schiff-base intermediate with substrate. I203 serves as a coordination point for pyruvate.

It belongs to the DapA family. In terms of assembly, homotetramer; dimer of dimers.

Its subcellular location is the cytoplasm. The catalysed reaction is L-aspartate 4-semialdehyde + pyruvate = (2S,4S)-4-hydroxy-2,3,4,5-tetrahydrodipicolinate + H2O + H(+). It functions in the pathway amino-acid biosynthesis; L-lysine biosynthesis via DAP pathway; (S)-tetrahydrodipicolinate from L-aspartate: step 3/4. Its function is as follows. Catalyzes the condensation of (S)-aspartate-beta-semialdehyde [(S)-ASA] and pyruvate to 4-hydroxy-tetrahydrodipicolinate (HTPA). The sequence is that of 4-hydroxy-tetrahydrodipicolinate synthase from Laribacter hongkongensis (strain HLHK9).